The chain runs to 1479 residues: Chromosome partition protein MukB (1479 aa).

Residue glycine 34 to serine 41 coordinates ATP. 2 coiled-coil regions span residues glutamate 138–valine 163 and glutamine 331–glutamine 664. The flexible hinge stretch occupies residues proline 665–arginine 782. Coiled-coil stretches lie at residues aspartate 831–alanine 1112 and valine 1206–glutamine 1257.

The protein belongs to the SMC family. MukB subfamily. As to quaternary structure, homodimerization via its hinge domain. Binds to DNA via its C-terminal region. Interacts, and probably forms a ternary complex, with MukE and MukF via its C-terminal region. The complex formation is stimulated by calcium or magnesium. Interacts with tubulin-related protein FtsZ.

Its subcellular location is the cytoplasm. It localises to the nucleoid. Plays a central role in chromosome condensation, segregation and cell cycle progression. Functions as a homodimer, which is essential for chromosome partition. Involved in negative DNA supercoiling in vivo, and by this means organize and compact chromosomes. May achieve or facilitate chromosome segregation by condensation DNA from both sides of a centrally located replisome during cell division. The polypeptide is Chromosome partition protein MukB (Klebsiella pneumoniae).